A 320-amino-acid chain; its full sequence is Beta-sarcoglycan (320 aa).

Residues 1–10 (MAAAAAAAAA) are compositionally biased toward low complexity. Residues 1-34 (MAAAAAAAAATEQQSSNGPVKKSMREKAVERRNV) form a disordered region. The Cytoplasmic portion of the chain corresponds to 1–67 (MAAAAAAAAA…GLRGRKGNLA (67 aa)). A compositionally biased stretch (basic and acidic residues) spans 23 to 34 (SMREKAVERRNV). The helical; Signal-anchor for type II membrane protein transmembrane segment at 68 to 88 (ICVIVLLFILAVINLLITLVI) threads the bilayer. The Extracellular portion of the chain corresponds to 89-320 (WAVIRIGPNG…VADNPCGNTH (232 aa)). Residues N160, N213, and N260 are each glycosylated (N-linked (GlcNAc...) asparagine). 2 disulfide bridges follow: C290–C316 and C292–C309.

Belongs to the sarcoglycan beta/delta/gamma/zeta family. In terms of assembly, cross-link to form 2 major subcomplexes: one consisting of SGCB, SGCD and SGCG and the other consisting of SGCB and SGCD. The association between SGCB and SGCG is particularly strong while SGCA is loosely associated with the other sarcoglycans. Post-translationally, disulfide bonds are present.

The protein resides in the cell membrane. It localises to the sarcolemma. It is found in the cytoplasm. Its subcellular location is the cytoskeleton. In terms of biological role, component of the sarcoglycan complex, a subcomplex of the dystrophin-glycoprotein complex which forms a link between the F-actin cytoskeleton and the extracellular matrix. The polypeptide is Beta-sarcoglycan (SGCB) (Mesocricetus auratus (Golden hamster)).